The sequence spans 476 residues: FAD-dependent monooxygenase ausM (476 aa).

3 residues coordinate FAD: Glu-41, Gly-55, and Arg-114. Tyr-222 is a catalytic residue. FAD is bound by residues Asp-314 and Ala-327. A helical membrane pass occupies residues 447–467; it reads LGSTPIHMLTLLLPCLFYFMY.

This sequence belongs to the paxM FAD-dependent monooxygenase family. The cofactor is FAD.

It is found in the membrane. Its pathway is secondary metabolite biosynthesis; terpenoid biosynthesis. In terms of biological role, FAD-dependent monooxygenase; part of the gene cluster A that mediates the biosynthesis of the fungal meroterpenoid acetoxydehydroaustin. The first step of the pathway is the synthesis of 3,5-dimethylorsellinic acid by the polyketide synthase ausA. 3,5-dimethylorsellinic acid is then prenylated by the polyprenyl transferase ausN. Further epoxidation by the FAD-dependent monooxygenase ausM and cyclization by the probable terpene cyclase ausL lead to the formation of protoaustinoid A. Protoaustinoid A is then oxidized to spiro-lactone preaustinoid A3 by the combined action of the FAD-binding monooxygenases ausB and ausC, and the dioxygenase ausE. Acid-catalyzed keto-rearrangement and ring contraction of the tetraketide portion of preaustinoid A3 by ausJ lead to the formation of preaustinoid A4. The aldo-keto reductase ausK, with the help of ausH, is involved in the next step by transforming preaustinoid A4 into isoaustinone which is in turn hydroxylated by the P450 monooxygenase ausI to form austinolide. The cytochrome P450 monooxygenase ausG then modifies austinolide to austinol. Austinol is further acetylated to austin by the O-acetyltransferase ausP, which spontaneously changes to dehydroaustin. The cytochrome P450 monooxygenase then converts dehydroaustin is into 7-dehydrodehydroaustin. The hydroxylation catalyzed by ausR permits the second O-acetyltransferase ausQ to add an additional acetyl group to the molecule, leading to the formation of acetoxydehydroaustin. Due to genetic rearrangements of the clusters and the subsequent loss of some enzymes, the end product of the Penicillium brasilianum austinoid biosynthesis clusters is acetoxydehydroaustin. In Penicillium brasilianum, this protein is FAD-dependent monooxygenase ausM.